The primary structure comprises 594 residues: Actin-histidine N-methyltransferase (594 aa).

The segment at 1 to 22 (MGKKSRVKTQKSGTGATATVSP) is disordered. Polar residues predominate over residues 10–20 (QKSGTGATATV). S-adenosyl-L-methionine-binding positions include Arg75, 104–106 (EGF), Arg254, 275–279 (DMCNH), and 325–327 (SGF). Positions 94-314 (EGFEMVNFKE…AGEQIYIFYG (221 aa)) constitute an SET domain. A Phosphoserine modification is found at Ser513. Residues 549-594 (ENGLVNGENSIPNGTRSENESLNQESKRAVEDAKGSSSDSTAGVKE) are disordered. The span at 555-572 (GENSIPNGTRSENESLNQ) shows a compositional bias: polar residues. Over residues 573-582 (ESKRAVEDAK) the composition is skewed to basic and acidic residues. A compositionally biased stretch (polar residues) spans 583–594 (GSSSDSTAGVKE).

It belongs to the class V-like SAM-binding methyltransferase superfamily. SETD3 actin-histidine methyltransferase family. As to quaternary structure, interacts with MYOD1. Phosphorylated by GSK3B, which is required for recognition by the SCF(FBXW7) complex and subsequent degradation. In terms of processing, ubiquitinated by the SCF(FBXW7) complex following phosphorylation by GSK3B, leading to its degradation by the proteasome.

The protein localises to the cytoplasm. Its subcellular location is the nucleus. It carries out the reaction L-histidyl-[protein] + S-adenosyl-L-methionine = N(tele)-methyl-L-histidyl-[protein] + S-adenosyl-L-homocysteine + H(+). Protein-histidine N-methyltransferase that specifically mediates 3-methylhistidine (tele-methylhistidine) methylation of actin at 'His-73'. Histidine methylation of actin is required for smooth muscle contraction of the laboring uterus during delivery. Does not have protein-lysine N-methyltransferase activity and probably only catalyzes histidine methylation of actin. In Homo sapiens (Human), this protein is Actin-histidine N-methyltransferase.